Here is a 234-residue protein sequence, read N- to C-terminus: Large ribosomal subunit protein uL1c (234 aa).

This sequence belongs to the universal ribosomal protein uL1 family. Part of the 50S ribosomal subunit.

It is found in the plastid. The protein resides in the chloroplast. Binds directly to 23S rRNA. Might be involved in E site tRNA release (Potential). This chain is Large ribosomal subunit protein uL1c (rpl1), found in Rhodomonas salina (Cryptomonas salina).